Consider the following 208-residue polypeptide: MKILRIDSSPLGDASVSRQLTASIVAALRQATPDAEVSVRDLTVAPPDHLTGELMQVVKFRNLEGLTARQQEELALTDALVDEFLAADVVVIGAPMYNFTVPTQLKAWIDRIAQAGRTFRYTETGPVGLAGGKKVYIASTRGGVYSTNAAMSALDHQEAFLRTVLGFLGVTDVTVIRAEGVGMGPDARAKALAAAQQEIDALAVPVAA.

FMN-binding positions include Ser9, 15–17 (SVS), 96–99 (MYNF), and 140–143 (TRGG).

It belongs to the azoreductase type 1 family. Homodimer. Requires FMN as cofactor.

It catalyses the reaction 2 a quinone + NADH + H(+) = 2 a 1,4-benzosemiquinone + NAD(+). It carries out the reaction N,N-dimethyl-1,4-phenylenediamine + anthranilate + 2 NAD(+) = 2-(4-dimethylaminophenyl)diazenylbenzoate + 2 NADH + 2 H(+). In terms of biological role, quinone reductase that provides resistance to thiol-specific stress caused by electrophilic quinones. Functionally, also exhibits azoreductase activity. Catalyzes the reductive cleavage of the azo bond in aromatic azo compounds to the corresponding amines. This chain is FMN-dependent NADH:quinone oxidoreductase, found in Azospirillum brasilense.